Reading from the N-terminus, the 299-residue chain is Oxygen-dependent coproporphyrinogen-III oxidase (299 aa).

Ser-92 lines the substrate pocket. 2 residues coordinate a divalent metal cation: His-96 and His-106. The active-site Proton donor is the His-106. Residue 108-110 (NVR) participates in substrate binding. Positions 145 and 175 each coordinate a divalent metal cation. Positions 240–275 (YVEFNLVWDRGTLFGLQTGGRTESILMSMPPLVRWE) are important for dimerization. Residue 258–260 (GGR) coordinates substrate.

Belongs to the aerobic coproporphyrinogen-III oxidase family. In terms of assembly, homodimer. A divalent metal cation is required as a cofactor.

Its subcellular location is the cytoplasm. The catalysed reaction is coproporphyrinogen III + O2 + 2 H(+) = protoporphyrinogen IX + 2 CO2 + 2 H2O. Its pathway is porphyrin-containing compound metabolism; protoporphyrin-IX biosynthesis; protoporphyrinogen-IX from coproporphyrinogen-III (O2 route): step 1/1. Functionally, involved in the heme biosynthesis. Catalyzes the aerobic oxidative decarboxylation of propionate groups of rings A and B of coproporphyrinogen-III to yield the vinyl groups in protoporphyrinogen-IX. This Salmonella choleraesuis (strain SC-B67) protein is Oxygen-dependent coproporphyrinogen-III oxidase.